Reading from the N-terminus, the 447-residue chain is ATP-dependent protease ATPase subunit HslU (447 aa).

ATP-binding positions include I18, 60–65, D259, E325, and R397; that span reads GVGKTE.

Belongs to the ClpX chaperone family. HslU subfamily. In terms of assembly, a double ring-shaped homohexamer of HslV is capped on each side by a ring-shaped HslU homohexamer. The assembly of the HslU/HslV complex is dependent on binding of ATP.

It is found in the cytoplasm. Its function is as follows. ATPase subunit of a proteasome-like degradation complex; this subunit has chaperone activity. The binding of ATP and its subsequent hydrolysis by HslU are essential for unfolding of protein substrates subsequently hydrolyzed by HslV. HslU recognizes the N-terminal part of its protein substrates and unfolds these before they are guided to HslV for hydrolysis. In Burkholderia ambifaria (strain MC40-6), this protein is ATP-dependent protease ATPase subunit HslU.